A 308-amino-acid chain; its full sequence is uncharacterized protein (308 aa).

10 helical membrane-spanning segments follow: residues 6-26, 31-51, 63-83, 100-120, 128-148, 162-182, 195-215, 221-241, 257-277, and 287-307; these read VVLIVLILVLVGYFSKIFGIL, AKILNNIVIYIAMPSTIFLTI, FLKLPVVIFLCCLFVGILAYL, ILVSMLGNTGFLGYPVALGMF, AIFCDLGGVFATMLLGTYVGI, MAKFPPLITGILSIILVFFGF, LNYLSSATVPLIMMSLGLSLS, FGVFWGIIASIFRFIVSPATA, VLLVESSMPSAMMTLVLGTLY, and SIFITTTFSLLVIALWGWILL.

This sequence belongs to the auxin efflux carrier (TC 2.A.69) family.

It localises to the cell membrane. This is an uncharacterized protein from Methanocaldococcus jannaschii (strain ATCC 43067 / DSM 2661 / JAL-1 / JCM 10045 / NBRC 100440) (Methanococcus jannaschii).